A 418-amino-acid polypeptide reads, in one-letter code: Putative F-box protein At3g23950 (418 aa).

Positions 1 to 42 constitute an F-box domain; sequence MNIPPELTFEVLVRLPLKSLARFRSMCKEWKLVIDSEFFRDC.

The protein is Putative F-box protein At3g23950 of Arabidopsis thaliana (Mouse-ear cress).